Reading from the N-terminus, the 479-residue chain is Poly(A) polymerase catalytic subunit (479 aa).

Catalysis depends on residues aspartate 202 and aspartate 204. 3 residues coordinate Ca(2+): aspartate 202, aspartate 204, and aspartate 253.

The protein belongs to the poxviridae poly(A) polymerase catalytic subunit family. In terms of assembly, heterodimer of a large (catalytic) subunit and a small (regulatory) subunit.

It catalyses the reaction RNA(n) + ATP = RNA(n)-3'-adenine ribonucleotide + diphosphate. Functionally, polymerase that creates the 3'-poly(A) tail of mRNA's. This chain is Poly(A) polymerase catalytic subunit (OPG063), found in Cynomys gunnisoni (Gunnison's prairie dog).